The chain runs to 255 residues: NAP1-related protein 2 (255 aa).

Residues 19–60 adopt a coiled-coil conformation; that stretch reads IDAELVLSIEKLQEIQDDLEKINEKASDEVLEVEQKYNVIRK. The segment at 213–255 is disordered; sequence NPLTYFNNDADEEDFDGDDDGDEEEKEGDSDEDDDEEDEVGEE. Residues 221–255 show a composition bias toward acidic residues; sequence DADEEDFDGDDDGDEEEKEGDSDEDDDEEDEVGEE.

Belongs to the nucleosome assembly protein (NAP) family. Can form homomeric and heteromeric protein complexes with NRP1. Binds histones H2A and H2B and associates with chromatin in vivo. Ubiquitous.

The protein resides in the cytoplasm. It is found in the nucleus. Acts as a histone H2A/H2B chaperone in nucleosome assembly, playing a critical role for the correct expression of genes involved in root proliferation and patterning. Required with NRP1 for the maintenance of cell proliferation and differentiation in postembryonic root growth. Involved in both intramolecular and intermolecular somatic homologous recombination. The polypeptide is NAP1-related protein 2 (NRP2) (Arabidopsis thaliana (Mouse-ear cress)).